An 827-amino-acid polypeptide reads, in one-letter code: Zinc finger protein 438 (827 aa).

Disordered regions lie at residues 1-31, 117-173, and 193-232; these read MQNS…LQNK, LKLP…LYKP, and ALTN…AKQD. 2 stretches are compositionally biased toward polar residues: residues 16-31 and 150-159; these read NIPS…LQNK and PAQTQMCPQM. A compositionally biased stretch (pro residues) spans 217-226; it reads PATPASPTPE. 3 consecutive C2H2-type zinc fingers follow at residues 506 to 528, 534 to 556, and 566 to 589; these read HRCH…MNTH, YSCR…MKLH, and MCCE…KEVH. A disordered region spans residues 682–723; the sequence is FPGSKGTQEELVQHASHDWKRHPERGKPEKVHSSSEESHACP. Composition is skewed to basic and acidic residues over residues 688–699 and 706–721; these read TQEELVQHASHD and RGKP…ESHA. Residues 775–798 form a C2H2-type 4 zinc finger; that stretch reads FNCLLCAEMLGQKEDLLHHWKHQH.

It localises to the nucleus. Its function is as follows. Acts as a transcriptional repressor. This is Zinc finger protein 438 (ZNF438) from Pongo abelii (Sumatran orangutan).